The following is a 419-amino-acid chain: L-rhamnose isomerase (419 aa).

The Mn(2+) site is built by H262, D294, and D296.

It belongs to the rhamnose isomerase family. As to quaternary structure, homotetramer. Requires Mn(2+) as cofactor.

The protein resides in the cytoplasm. It carries out the reaction L-rhamnopyranose = L-rhamnulose. The protein operates within carbohydrate degradation; L-rhamnose degradation; glycerone phosphate from L-rhamnose: step 1/3. Catalyzes the interconversion of L-rhamnose and L-rhamnulose. This Shigella sonnei (strain Ss046) protein is L-rhamnose isomerase.